We begin with the raw amino-acid sequence, 456 residues long: Bifunctional protein GlmU (456 aa).

Residues 1-231 (MERTCLAIIL…EEELTGCNTR (231 aa)) are pyrophosphorylase. Residues 10-13 (LAAG), K24, Q77, and 82-83 (GT) each bind UDP-N-acetyl-alpha-D-glucosamine. Position 107 (D107) interacts with Mg(2+). 4 residues coordinate UDP-N-acetyl-alpha-D-glucosamine: G143, E157, N172, and N229. Residue N229 participates in Mg(2+) binding. The interval 232-252 (AELAYIERLWQQRRRHELMLA) is linker. Residues 253-456 (GVSMVAPETV…LARKIAKAAE (204 aa)) are N-acetyltransferase. The UDP-N-acetyl-alpha-D-glucosamine site is built by R318 and K336. Residue H348 is the Proton acceptor of the active site. UDP-N-acetyl-alpha-D-glucosamine is bound by residues Y351 and N362. Acetyl-CoA contacts are provided by residues A365, 371–372 (NY), S390, S408, and R425.

This sequence in the N-terminal section; belongs to the N-acetylglucosamine-1-phosphate uridyltransferase family. The protein in the C-terminal section; belongs to the transferase hexapeptide repeat family. In terms of assembly, homotrimer. Mg(2+) is required as a cofactor.

It is found in the cytoplasm. The catalysed reaction is alpha-D-glucosamine 1-phosphate + acetyl-CoA = N-acetyl-alpha-D-glucosamine 1-phosphate + CoA + H(+). It catalyses the reaction N-acetyl-alpha-D-glucosamine 1-phosphate + UTP + H(+) = UDP-N-acetyl-alpha-D-glucosamine + diphosphate. It participates in nucleotide-sugar biosynthesis; UDP-N-acetyl-alpha-D-glucosamine biosynthesis; N-acetyl-alpha-D-glucosamine 1-phosphate from alpha-D-glucosamine 6-phosphate (route II): step 2/2. The protein operates within nucleotide-sugar biosynthesis; UDP-N-acetyl-alpha-D-glucosamine biosynthesis; UDP-N-acetyl-alpha-D-glucosamine from N-acetyl-alpha-D-glucosamine 1-phosphate: step 1/1. Its pathway is bacterial outer membrane biogenesis; LPS lipid A biosynthesis. Functionally, catalyzes the last two sequential reactions in the de novo biosynthetic pathway for UDP-N-acetylglucosamine (UDP-GlcNAc). The C-terminal domain catalyzes the transfer of acetyl group from acetyl coenzyme A to glucosamine-1-phosphate (GlcN-1-P) to produce N-acetylglucosamine-1-phosphate (GlcNAc-1-P), which is converted into UDP-GlcNAc by the transfer of uridine 5-monophosphate (from uridine 5-triphosphate), a reaction catalyzed by the N-terminal domain. The polypeptide is Bifunctional protein GlmU (Sinorhizobium medicae (strain WSM419) (Ensifer medicae)).